Reading from the N-terminus, the 173-residue chain is Alpha-crystallin A chain (173 aa).

The residue at position 1 (Met1) is an N-acetylmethionine. The interval 1 to 63 is required for complex formation with BFSP1 and BFSP2; that stretch reads MDIAIQHPWF…RTVLDSGISE (63 aa). Deamidated glutamine; partial is present on Gln6. Ser45 bears the Phosphoserine mark. The residue at position 50 (Gln50) is a Deamidated glutamine; partial. The 111-residue stretch at 52–162 folds into the sHSP domain; the sequence is LFRTVLDSGI…GHSERAIPVS (111 aa). Position 70 is an N6-acetyllysine (Lys70). Deamidated glutamine; partial is present on Gln90. Lys99 bears the N6-acetyllysine mark. Residue His100 participates in Zn(2+) binding. Asn101 carries the deamidated asparagine; partial modification. Zn(2+) is bound by residues Glu102 and His107. The residue at position 122 (Ser122) is a Phosphoserine. The residue at position 123 (Asn123) is a Deamidated asparagine; partial. Residues 144–173 form a disordered region; it reads PKVPSGMDAGHSERAIPVSREEKPSSAPSS. Residues 153–167 show a composition bias toward basic and acidic residues; that stretch reads GHSERAIPVSREEKP. His154 is a Zn(2+) binding site. Residue Ser162 is glycosylated (O-linked (GlcNAc) serine).

This sequence belongs to the small heat shock protein (HSP20) family. In terms of assembly, heteromer composed of three CRYAA and one CRYAB subunits. Inter-subunit bridging via zinc ions enhances stability, which is crucial as there is no protein turn over in the lens. Can also form homodimers and homotetramers (dimers of dimers) which serve as the building blocks of homooligomers. Within homooligomers, the zinc-binding motif is created from residues of 3 different molecules. His-100 and Glu-102 from one molecule are ligands of the zinc ion, and His-107 and His-154 residues from additional molecules complete the site with tetrahedral coordination geometry. Part of a complex required for lens intermediate filament formation composed of BFSP1, BFSP2 and CRYAA. Acetylation at Lys-70 may increase chaperone activity. Post-translationally, undergoes age-dependent proteolytical cleavage at the C-terminus.

Its subcellular location is the cytoplasm. The protein localises to the nucleus. Functionally, contributes to the transparency and refractive index of the lens. Acts as a chaperone, preventing aggregation of various proteins under a wide range of stress conditions. Required for the correct formation of lens intermediate filaments as part of a complex composed of BFSP1, BFSP2 and CRYAA. The protein is Alpha-crystallin A chain (CRYAA) of Balaenoptera acutorostrata (Common minke whale).